The primary structure comprises 56 residues: Large ribosomal subunit protein bL33A (56 aa).

It belongs to the bacterial ribosomal protein bL33 family.

The sequence is that of Large ribosomal subunit protein bL33A from Sorangium cellulosum (strain So ce56) (Polyangium cellulosum (strain So ce56)).